We begin with the raw amino-acid sequence, 31 residues long: Cytochrome b6-f complex subunit 6 (31 aa).

The chain crosses the membrane as a helical span at residues 3–23 (AIVAYIGFLALFTGIAAGLLF).

This sequence belongs to the PetL family. As to quaternary structure, the 4 large subunits of the cytochrome b6-f complex are cytochrome b6, subunit IV (17 kDa polypeptide, PetD), cytochrome f and the Rieske protein, while the 4 small subunits are PetG, PetL, PetM and PetN. The complex functions as a dimer.

It is found in the cellular thylakoid membrane. Component of the cytochrome b6-f complex, which mediates electron transfer between photosystem II (PSII) and photosystem I (PSI), cyclic electron flow around PSI, and state transitions. PetL is important for photoautotrophic growth as well as for electron transfer efficiency and stability of the cytochrome b6-f complex. The sequence is that of Cytochrome b6-f complex subunit 6 from Nostoc sp. (strain PCC 7120 / SAG 25.82 / UTEX 2576).